A 492-amino-acid chain; its full sequence is Ketol-acid reductoisomerase (NADP(+)) (492 aa).

The region spanning 15-208 (AQLGKCRFMA…GGHRAGVLEF (194 aa)) is the KARI N-terminal Rossmann domain. NADP(+) is bound by residues 45–48 (CGAQ), arginine 68, arginine 76, serine 78, and 108–110 (DKQ). Histidine 132 is a catalytic residue. Residue glycine 158 coordinates NADP(+). 2 consecutive KARI C-terminal knotted domains span residues 209-344 (SFVA…NAPQ) and 345-485 (FEGK…MTDM). Positions 217, 221, 389, and 393 each coordinate Mg(2+). Serine 414 provides a ligand contact to substrate.

This sequence belongs to the ketol-acid reductoisomerase family. Mg(2+) serves as cofactor.

The catalysed reaction is (2R)-2,3-dihydroxy-3-methylbutanoate + NADP(+) = (2S)-2-acetolactate + NADPH + H(+). It catalyses the reaction (2R,3R)-2,3-dihydroxy-3-methylpentanoate + NADP(+) = (S)-2-ethyl-2-hydroxy-3-oxobutanoate + NADPH + H(+). It participates in amino-acid biosynthesis; L-isoleucine biosynthesis; L-isoleucine from 2-oxobutanoate: step 2/4. It functions in the pathway amino-acid biosynthesis; L-valine biosynthesis; L-valine from pyruvate: step 2/4. Involved in the biosynthesis of branched-chain amino acids (BCAA). Catalyzes an alkyl-migration followed by a ketol-acid reduction of (S)-2-acetolactate (S2AL) to yield (R)-2,3-dihydroxy-isovalerate. In the isomerase reaction, S2AL is rearranged via a Mg-dependent methyl migration to produce 3-hydroxy-3-methyl-2-ketobutyrate (HMKB). In the reductase reaction, this 2-ketoacid undergoes a metal-dependent reduction by NADPH to yield (R)-2,3-dihydroxy-isovalerate. The polypeptide is Ketol-acid reductoisomerase (NADP(+)) (Yersinia pestis bv. Antiqua (strain Antiqua)).